Reading from the N-terminus, the 619-residue chain is Lysophospholipid acyltransferase (619 aa).

Over 1–19 the chain is Lumenal; it reads MYNPVDAVLTKIITNYGID. A helical transmembrane segment spans residues 20–39; sequence SFTLRYAICLLGSFPLNAIL. The Cytoplasmic segment spans residues 40-51; it reads KRIPEKRIGLKC. Residues 52–72 traverse the membrane as a helical segment; that stretch reads CFIISMSMFYLFGVLNLVSGF. Residues 73–92 are Lumenal-facing; it reads RTLFISTMFTYLISRFYRSK. Residues 93–113 form a helical membrane-spanning segment; that stretch reads FMPHLNFMFVMGHLAINHIHA. The Cytoplasmic segment spans residues 114-231; sequence QFLNEQTQTT…GERRQIPKNG (118 aa). Asp-146 serves as the catalytic Nucleophile. A helical transmembrane segment spans residues 232-252; it reads KLALWKVVQGLAWMILSTLGM. Topologically, residues 253 to 274 are lumenal; that stretch reads KHFPVKYVLDKDGFPTRSFIFR. Residues 275 to 295 form a helical membrane-spanning segment; the sequence is IHYLFLLGFIHRFKYYAAWTI. The Cytoplasmic segment spans residues 296-429; the sequence is SEGSCILCGL…TPLPSKKIYD (134 aa). Glu-297 serves as the catalytic Nucleophile. The active site involves His-382. A helical membrane pass occupies residues 430–450; the sequence is LVGIYAIKLAFGYMVQPFIIL. At 451–456 the chain is on the lumenal side; that stretch reads DLKPSL. Residues 457–477 traverse the membrane as a helical segment; sequence MVWGSVYFYVHIIVAFSFFLF. The Cytoplasmic segment spans residues 478-619; it reads RGPYAKQVTE…SPKPISKKEE (142 aa). Ser-513 bears the Phosphoserine mark. The stretch at 545–593 forms a coiled coil; the sequence is ELEKWDNAKEDWEDFCKDYKEWRNKNGLEIEEENLSKAFERFKQEFSNA. The interval 592-619 is disordered; the sequence is NAASGSGERVRKMSFSGYSPKPISKKEE. 3 positions are modified to phosphoserine: Ser-605, Ser-610, and Ser-615.

Belongs to the membrane-bound acyltransferase family.

It is found in the endoplasmic reticulum membrane. The enzyme catalyses a 1-acyl-sn-glycero-3-phosphate + an acyl-CoA = a 1,2-diacyl-sn-glycero-3-phosphate + CoA. It carries out the reaction a 1-acyl-sn-glycero-3-phosphocholine + an acyl-CoA = a 1,2-diacyl-sn-glycero-3-phosphocholine + CoA. The catalysed reaction is 1-acyl-sn-glycero-3-phospho-(1'-sn-glycerol) + an acyl-CoA = a 1,2-diacyl-sn-glycero-3-phospho-(1'-sn-glycerol) + CoA. It catalyses the reaction a 1-acyl-sn-glycero-3-phospho-(1D-myo-inositol) + an acyl-CoA = a 1,2-diacyl-sn-glycero-3-phospho-(1D-myo-inositol) + CoA. The enzyme catalyses a 1-acyl-sn-glycero-3-phospho-L-serine + an acyl-CoA = a 1,2-diacyl-sn-glycero-3-phospho-L-serine + CoA. It carries out the reaction a 1-acyl-sn-glycero-3-phosphoethanolamine + an acyl-CoA = a 1,2-diacyl-sn-glycero-3-phosphoethanolamine + CoA. The catalysed reaction is 1-(9Z-octadecenoyl)-sn-glycero-3-phosphoethanolamine + (9Z)-octadecenoyl-CoA = 1,2-di-(9Z-octadecenoyl)-sn-glycero-3-phosphoethanolamine + CoA. It catalyses the reaction 1-(9Z-octadecenoyl)-sn-glycero-3-phosphoethanolamine + (9Z)-hexadecenoyl-CoA = 1-(9Z)-octadecenoyl-2-(9Z)-hexadecenoyl-sn-glycero-3-phosphoethanolamine + CoA. The enzyme catalyses 1-(9Z-octadecenoyl)-sn-glycero-3-phosphoethanolamine + hexadecanoyl-CoA = 1-(9Z-octadecenoyl)-2-hexadecanoyl-sn-glycero-3-phosphoethanolamine + CoA. It carries out the reaction 1-(9Z-octadecenoyl)-sn-glycero-3-phosphoethanolamine + tetradecanoyl-CoA = 1-(9Z)-octadecenoyl-2-tetradecanoyl-sn-glycero-3-phosphoethanolamine + CoA. The catalysed reaction is 1-(9Z-octadecenoyl)-sn-glycero-3-phosphate + (9Z)-octadecenoyl-CoA = 1,2-di-(9Z-octadecenoyl)-sn-glycero-3-phosphate + CoA. It catalyses the reaction (9Z)-hexadecenoyl-CoA + 1-hexadecanoyl-sn-glycero-3-phosphocholine = 1-hexadecanoyl-2-(9Z-hexadecenoyl)-sn-glycero-3-phosphocholine + CoA. The enzyme catalyses 1-hexadecanoyl-sn-glycero-3-phosphocholine + (9Z)-octadecenoyl-CoA = 1-hexadecanoyl-2-(9Z-octadecenoyl)-sn-glycero-3-phosphocholine + CoA. It carries out the reaction 1-tetradecanoyl-sn-glycero-3-phosphoethanolamine + (9Z)-octadecenoyl-CoA = 1-tetradecanoyl-2-(9Z-octadecenoyl)-sn-glycero-3-phosphoethanolamine + CoA. The catalysed reaction is 1-(9Z-octadecenoyl)-sn-glycero-3-phospho-L-serine + (9Z)-octadecenoyl-CoA = 1,2-di-(9Z)-octadecenoyl-sn-glycero-3-phospho-L-serine + CoA. It catalyses the reaction a 1-acyl-sn-glycero-3-phospho-(1D-myo-inositol) + (9Z)-octadecenoyl-CoA = a 1-acyl-2-(9Z-octadecenoyl)-sn-glycero-3-phospho-(1D-myo-inositol) + CoA. The protein operates within lipid metabolism; phospholipid metabolism. In terms of biological role, broad specificity membrane-bound O-acyltransferase that mediates the incorporation of unsaturated acyl chains into the sn-2 position of various lysophospholipids. Preferentially acylates lysophosphocholine (LPC), but also lysophosphoethanolamine (LPE), lysophosphatidylglycerol (LPG), lysophosphatidic acid (LPA), lysophosphoethanolamine (LPE), lysophosphoinositol (LPI), and lysophosphoserine (LPS). Prefers an acyl residue to an alkyl residue at the sn-1 position of lysophospholipid acceptors. Accepts acyl chains in acyl-CoA from C-2 to C-20, and shows strong preference for unsaturated acyl-CoAs with 16-20 carbons. Together with SLC1, plays a central role in phosphatidic acid (PA) biosynthesis. PA is the intermediate, from which all glycerophospholipids are synthesized. Can also introduce an acyl chain at the sn-1 position of the lysophosphatidylcholine analog 1-hydroxy-2-hexadecyl-sn-glycero-3-phosphocholine (HHPC). This chain is Lysophospholipid acyltransferase, found in Saccharomyces cerevisiae (strain ATCC 204508 / S288c) (Baker's yeast).